The following is a 279-amino-acid chain: Putative pyruvate, phosphate dikinase regulatory protein (279 aa).

ADP is bound at residue 153–160 (GISRTSKT).

Belongs to the pyruvate, phosphate/water dikinase regulatory protein family. PDRP subfamily.

It catalyses the reaction N(tele)-phospho-L-histidyl/L-threonyl-[pyruvate, phosphate dikinase] + ADP = N(tele)-phospho-L-histidyl/O-phospho-L-threonyl-[pyruvate, phosphate dikinase] + AMP + H(+). The enzyme catalyses N(tele)-phospho-L-histidyl/O-phospho-L-threonyl-[pyruvate, phosphate dikinase] + phosphate + H(+) = N(tele)-phospho-L-histidyl/L-threonyl-[pyruvate, phosphate dikinase] + diphosphate. Its function is as follows. Bifunctional serine/threonine kinase and phosphorylase involved in the regulation of the pyruvate, phosphate dikinase (PPDK) by catalyzing its phosphorylation/dephosphorylation. This is Putative pyruvate, phosphate dikinase regulatory protein from Brucella melitensis biotype 2 (strain ATCC 23457).